A 133-amino-acid chain; its full sequence is ATP synthase epsilon chain (133 aa).

Belongs to the ATPase epsilon chain family. As to quaternary structure, F-type ATPases have 2 components, CF(1) - the catalytic core - and CF(0) - the membrane proton channel. CF(1) has five subunits: alpha(3), beta(3), gamma(1), delta(1), epsilon(1). CF(0) has three main subunits: a, b and c.

Its subcellular location is the cell membrane. Its function is as follows. Produces ATP from ADP in the presence of a proton gradient across the membrane. The chain is ATP synthase epsilon chain from Bacillus mycoides (strain KBAB4) (Bacillus weihenstephanensis).